The following is a 155-amino-acid chain: Vasotocin-neurophysin VT 2 (155 aa).

A signal peptide spans 1–20; the sequence is MSVCAVLLLCVAGLLCLSSA. An intrachain disulfide couples Cys21 to Cys26. Position 29 is a glycine amide (Gly29). Disulfide bonds link Cys42/Cys86, Cys45/Cys59, Cys53/Cys76, Cys60/Cys66, Cys93/Cys106, Cys100/Cys118, and Cys107/Cys112. Residues 119–128 are compositionally biased toward acidic residues; the sequence is SEDSESEEPA. The interval 119–139 is disordered; that stretch reads SEDSESEEPADQNTLGASPGE.

The protein belongs to the vasopressin/oxytocin family.

It localises to the secreted. Its function is as follows. Vasotocin is an antidiuretic hormone. The chain is Vasotocin-neurophysin VT 2 from Catostomus commersonii (White sucker).